The sequence spans 259 residues: Undecaprenyl-diphosphatase 4 (259 aa).

8 helical membrane-spanning segments follow: residues 1–21 (MNWL…FLPI), 39–59 (AGLF…FIYY), 71–91 (FSKL…IGLL), 99–119 (ISKT…FLYM), 133–153 (ITYK…FPAI), 173–193 (AAYF…ILQF), 208–228 (SLIV…SWMI), and 239–259 (FAYY…THVF).

The protein belongs to the UppP family.

The protein resides in the cell membrane. It carries out the reaction di-trans,octa-cis-undecaprenyl diphosphate + H2O = di-trans,octa-cis-undecaprenyl phosphate + phosphate + H(+). Functionally, catalyzes the dephosphorylation of undecaprenyl diphosphate (UPP). Confers resistance to bacitracin. In Bacillus thuringiensis (strain Al Hakam), this protein is Undecaprenyl-diphosphatase 4.